The sequence spans 537 residues: Cytochrome P450 monooxygenase claR (537 aa).

Residues 23 to 43 form a helical membrane-spanning segment; the sequence is VVTITEVALGIITLYLLGSYI. Residue cysteine 454 participates in heme binding.

It belongs to the cytochrome P450 family. It depends on heme as a cofactor.

The protein localises to the membrane. It catalyses the reaction (2E)-geranylhydroquinone + reduced [NADPH--hemoprotein reductase] + O2 = wigandol + oxidized [NADPH--hemoprotein reductase] + 2 H2O + H(+). The protein operates within secondary metabolite biosynthesis; terpenoid biosynthesis. Cytochrome P450 monooxygenase; part of the gene cluster that mediates the biosynthesis of clavilactone A, a meroterpenoid that features a unique benzo-fused ten-membered carbocyclic ring unit with an alpha,beta-epoxy-gamma-lactone moiety, forming an intriguing 10/5/3 tricyclic nested skeleton. ClaR, ClaS and ClaT are sufficient to produce clavilactone A. ClaR acts as a macrocyclase to catalyze the oxidative cyclization of the isopentenyl to the nonterpenoid moieties to form the benzo-fused macrocycle, leading to wigantol. The biosynthesis begins with the prenyltransferase claS that transfers geranyl pyrophosphate (GPP) to hydroquinone to produces geranylhydroquinone. The cytochrome P450 monooxygenase claR then catalyzes the diradical coupling reaction between the intramolecular hydroquinone and allyl moieties to form the benzo-fused ten-membered carbocyclic ring unit of wigantol. Finally the cytochrome P450 monooxygenase claT exquisitely and stereoselectively assembles the alpha,beta-epoxy-gamma-lactone moiety, producing clavilactone A via arnebinol A. The chain is Cytochrome P450 monooxygenase claR from Ampulloclitocybe clavipes (Club foot).